The sequence spans 804 residues: uncharacterized protein (804 aa).

The next 10 helical transmembrane spans lie at 15-35 (LLIVWLALSLAVACVLALGNI), 243-263 (FLLLSALLTLLLAVAAVAVAM), 301-321 (LSAVTGGAIGLLFENVLMVLL), 333-353 (SLWPWLWALGTMTVISLLVGL), 381-401 (FYLPIVSVVVVLLLAGLMGGS), 403-423 (LLWAVLAGAVVLALLCGVLGW), 453-473 (TLSQLSAFSLSFMLLALLLVL), 680-700 (ALEVMVVLVTACGMLLLLAQV), 734-754 (MLGFVSGLVAAIGAETALAVL), and 769-789 (LWIVLPCSGALLLSLFGGWLG).

Belongs to the ABC-4 integral membrane protein family.

It localises to the cell membrane. This is an uncharacterized protein from Escherichia coli (strain K12).